The following is a 301-amino-acid chain: Thyrotroph embryonic factor (301 aa).

Disordered stretches follow at residues 1-70 and 130-174; these read MSDA…ASTM and ESAS…DPSC. At serine 30 the chain carries Phosphoserine. Over residues 39 to 59 the composition is skewed to basic and acidic residues; it reads KLMENPPRETRLDKEKGKEKL. Over residues 131–158 the composition is skewed to low complexity; that stretch reads SASSSTASPPSSSTAIFQPSETVSSTES. The bZIP domain occupies 231–294; it reads DEKYWTRRKK…GKCKTIVSKY (64 aa). The tract at residues 233–253 is basic motif; sequence KYWTRRKKNNVAAKRSRDARR. Positions 254–261 are leucine-zipper; that stretch reads LKENQITI.

It belongs to the bZIP family. PAR subfamily. In terms of assembly, binds DNA as a homodimer or a heterodimer. Can form a heterodimer with DBP. As to expression, isoform Alpha and isoform Beta are expressed at high levels in lung, bladder, kidney, gut and brain.

Its subcellular location is the nucleus. Its function is as follows. Transcription factor that binds to and transactivates the TSHB promoter. Binds to a minimal DNA-binding sequence 5'-[TC][AG][AG]TTA[TC][AG]-3'. Also activates the telokin promoter in smooth muscle-specific and calcium-dependent manner. The protein is Thyrotroph embryonic factor (Tef) of Mus musculus (Mouse).